The following is a 198-amino-acid chain: Ribonuclease HII (198 aa).

Residues 10–198 (QLVAGVDEVG…PVKRALGLAS (189 aa)) enclose the RNase H type-2 domain. Aspartate 16, glutamate 17, and aspartate 108 together coordinate a divalent metal cation.

Belongs to the RNase HII family. It depends on Mn(2+) as a cofactor. Mg(2+) is required as a cofactor.

Its subcellular location is the cytoplasm. The catalysed reaction is Endonucleolytic cleavage to 5'-phosphomonoester.. Functionally, endonuclease that specifically degrades the RNA of RNA-DNA hybrids. The protein is Ribonuclease HII of Escherichia coli O45:K1 (strain S88 / ExPEC).